A 278-amino-acid polypeptide reads, in one-letter code: 4-diphosphocytidyl-2-C-methyl-D-erythritol kinase (278 aa).

The active site involves K9. ATP is bound at residue 93–103 (PLGGGLGGGSS). D135 is a catalytic residue.

It belongs to the GHMP kinase family. IspE subfamily.

It catalyses the reaction 4-CDP-2-C-methyl-D-erythritol + ATP = 4-CDP-2-C-methyl-D-erythritol 2-phosphate + ADP + H(+). Its pathway is isoprenoid biosynthesis; isopentenyl diphosphate biosynthesis via DXP pathway; isopentenyl diphosphate from 1-deoxy-D-xylulose 5-phosphate: step 3/6. Functionally, catalyzes the phosphorylation of the position 2 hydroxy group of 4-diphosphocytidyl-2C-methyl-D-erythritol. In Nitrosomonas europaea (strain ATCC 19718 / CIP 103999 / KCTC 2705 / NBRC 14298), this protein is 4-diphosphocytidyl-2-C-methyl-D-erythritol kinase.